A 462-amino-acid chain; its full sequence is Glutamate decarboxylase alpha (462 aa).

Lysine 273 is modified (N6-(pyridoxal phosphate)lysine).

The protein belongs to the group II decarboxylase family. Pyridoxal 5'-phosphate serves as cofactor.

It carries out the reaction L-glutamate + H(+) = 4-aminobutanoate + CO2. Its function is as follows. Converts internalized glutamate to GABA and increases the internal pH. Involved in glutamate-dependent acid resistance in gastric fluid. The polypeptide is Glutamate decarboxylase alpha (gadA) (Listeria monocytogenes serovar 1/2a (strain ATCC BAA-679 / EGD-e)).